The sequence spans 696 residues: PWWP domain-containing DNA repair factor 3B (696 aa).

Polar residues-rich tracts occupy residues 119–128 (QNVPQKQSDS) and 290–300 (CLDTSQNQPSM). Disordered regions lie at residues 119–143 (QNVP…DLPG) and 278–303 (NIED…MESE). S128 carries the post-translational modification Phosphoserine. One can recognise a PWWP domain in the interval 392–453 (TGMIVWFKYQ…KKFDCKEKQM (62 aa)).

The protein belongs to the PWWP3A family.

This is PWWP domain-containing DNA repair factor 3B from Homo sapiens (Human).